A 601-amino-acid chain; its full sequence is Elongation factor 4 (601 aa).

The tr-type G domain maps to 7-189 (DTIRNFSIVA…AIVAKLPPPK (183 aa)). GTP-binding positions include 19 to 24 (DHGKST) and 136 to 139 (NKID).

It belongs to the TRAFAC class translation factor GTPase superfamily. Classic translation factor GTPase family. LepA subfamily.

The protein localises to the cell inner membrane. It carries out the reaction GTP + H2O = GDP + phosphate + H(+). Functionally, required for accurate and efficient protein synthesis under certain stress conditions. May act as a fidelity factor of the translation reaction, by catalyzing a one-codon backward translocation of tRNAs on improperly translocated ribosomes. Back-translocation proceeds from a post-translocation (POST) complex to a pre-translocation (PRE) complex, thus giving elongation factor G a second chance to translocate the tRNAs correctly. Binds to ribosomes in a GTP-dependent manner. The sequence is that of Elongation factor 4 from Methylobacterium sp. (strain 4-46).